A 346-amino-acid polypeptide reads, in one-letter code: Large ribosomal subunit protein uL10 (346 aa).

Positions 307-346 (AAAVAKEPEKKEEVKEEEEEEEEEDHSEEDGMAGLGSLFG) are disordered. Residues 321 to 337 (KEEEEEEEEEDHSEEDG) show a composition bias toward acidic residues.

The protein belongs to the universal ribosomal protein uL10 family. In terms of assembly, part of the 50S ribosomal subunit. Forms part of the ribosomal stalk which helps the ribosome interact with GTP-bound translation factors. Forms both a pentameric L10(L12)2(L12)2 and heptameric L10(L12)2(L12)2(L12)2 complex, where L10 forms an elongated spine to which the L12 dimers bind in a sequential fashion. The proportion of heptameric complexes increases during cell growth.

Functionally, forms part of the ribosomal stalk, playing a central role in the interaction of the ribosome with GTP-bound translation factors. This chain is Large ribosomal subunit protein uL10, found in Methanosarcina barkeri (strain Fusaro / DSM 804).